Consider the following 901-residue polypeptide: Protein translocase subunit SecA (901 aa).

ATP contacts are provided by residues Gln87, 105-109 (GEGKT), and Asp512. 4 residues coordinate Zn(2+): Cys885, Cys887, Cys896, and His897.

This sequence belongs to the SecA family. Monomer and homodimer. Part of the essential Sec protein translocation apparatus which comprises SecA, SecYEG and auxiliary proteins SecDF-YajC and YidC. The cofactor is Zn(2+).

Its subcellular location is the cell inner membrane. It is found in the cytoplasm. The enzyme catalyses ATP + H2O + cellular proteinSide 1 = ADP + phosphate + cellular proteinSide 2.. Its function is as follows. Part of the Sec protein translocase complex. Interacts with the SecYEG preprotein conducting channel. Has a central role in coupling the hydrolysis of ATP to the transfer of proteins into and across the cell membrane, serving both as a receptor for the preprotein-SecB complex and as an ATP-driven molecular motor driving the stepwise translocation of polypeptide chains across the membrane. This is Protein translocase subunit SecA from Salmonella schwarzengrund (strain CVM19633).